The chain runs to 73 residues: UPF0499 protein CHGG_06021 (73 aa).

The N-terminal stretch at 1–20 (MKSSIHVVLFFLLSLVASMA) is a signal peptide. Disulfide bonds link cysteine 41–cysteine 55, cysteine 48–cysteine 60, and cysteine 54–cysteine 69.

The protein belongs to the UPF0499 family.

Its subcellular location is the secreted. In Chaetomium globosum (strain ATCC 6205 / CBS 148.51 / DSM 1962 / NBRC 6347 / NRRL 1970) (Soil fungus), this protein is UPF0499 protein CHGG_06021.